We begin with the raw amino-acid sequence, 175 residues long: Protein ppBat (175 aa).

Residues cysteine 74 and cysteine 111 each coordinate Zn(2+). 2 residues coordinate riboflavin: asparagine 161 and tryptophan 164.

In terms of assembly, homodimer.

Functionally, binds flavin derivatives, such as lumichrome, riboflavin, FMN, and FAD. May act as a flavin storage protein. Appears to lack proteolytic or chaperone activities. In Bacteroides thetaiotaomicron (strain ATCC 29148 / DSM 2079 / JCM 5827 / CCUG 10774 / NCTC 10582 / VPI-5482 / E50), this protein is Protein ppBat.